The following is an 845-amino-acid chain: Alanine--tRNA ligase (845 aa).

Zn(2+) contacts are provided by His552, His556, Cys653, and His657.

This sequence belongs to the class-II aminoacyl-tRNA synthetase family. The cofactor is Zn(2+).

It localises to the cytoplasm. The enzyme catalyses tRNA(Ala) + L-alanine + ATP = L-alanyl-tRNA(Ala) + AMP + diphosphate. Catalyzes the attachment of alanine to tRNA(Ala) in a two-step reaction: alanine is first activated by ATP to form Ala-AMP and then transferred to the acceptor end of tRNA(Ala). Also edits incorrectly charged Ser-tRNA(Ala) and Gly-tRNA(Ala) via its editing domain. The chain is Alanine--tRNA ligase from Campylobacter fetus subsp. fetus (strain 82-40).